Reading from the N-terminus, the 129-residue chain is KVYGRCELAAAMKRLGLDNYRGYSLGNWVCAAKFESNFNTHATNRNTDGSTDYGILQINSRWWCNDGRTPGSRNLCHIPCSALLSSDITASVNCAKKIVSDGNGMNAWVAWRNRCKGTDVNAWTRGCRL.

Residues 1–129 (KVYGRCELAA…VNAWTRGCRL (129 aa)) form the C-type lysozyme domain. Disulfide bonds link Cys6–Cys127, Cys30–Cys115, Cys64–Cys80, and Cys76–Cys94. Catalysis depends on residues Glu35 and Asp52.

It belongs to the glycosyl hydrolase 22 family. As to quaternary structure, monomer.

It is found in the secreted. It catalyses the reaction Hydrolysis of (1-&gt;4)-beta-linkages between N-acetylmuramic acid and N-acetyl-D-glucosamine residues in a peptidoglycan and between N-acetyl-D-glucosamine residues in chitodextrins.. Its function is as follows. Lysozymes have primarily a bacteriolytic function; those in tissues and body fluids are associated with the monocyte-macrophage system and enhance the activity of immunoagents. The chain is Lysozyme C (LYZ) from Chrysolophus amherstiae (Lady Amherst's pheasant).